Consider the following 161-residue polypeptide: Allophycocyanin alpha chain (161 aa).

At asparagine 71 the chain carries N4-methylasparagine. Cysteine 81 lines the (2R,3E)-phycocyanobilin pocket.

Belongs to the phycobiliprotein family. In terms of assembly, heterodimer of an alpha and a beta chain. Contains one covalently linked phycocyanobilin chromophore.

It is found in the plastid. Its subcellular location is the chloroplast thylakoid membrane. In terms of biological role, light-harvesting photosynthetic bile pigment-protein from the phycobiliprotein complex. Allophycocyanin has a maximum absorption at approximately 650 nanometers. The protein is Allophycocyanin alpha chain (apcA) of Aglaothamnion neglectum (Red alga).